We begin with the raw amino-acid sequence, 311 residues long: Dihydroorotate dehydrogenase A (fumarate) (311 aa).

FMN contacts are provided by residues serine 19 and 43–44 (KS). Substrate contacts are provided by residues lysine 43, 67–71 (NSMGL), and asparagine 127. Residue asparagine 127 participates in FMN binding. The active-site Nucleophile is the cysteine 130. Positions 164 and 192 each coordinate FMN. A substrate-binding site is contributed by 193–194 (NS). FMN-binding positions include glycine 221, 249–250 (GG), and 271–272 (GT).

Belongs to the dihydroorotate dehydrogenase family. Type 1 subfamily. Homodimer. The cofactor is FMN.

It localises to the cytoplasm. The catalysed reaction is (S)-dihydroorotate + fumarate = orotate + succinate. It functions in the pathway pyrimidine metabolism; UMP biosynthesis via de novo pathway. Functionally, catalyzes the conversion of dihydroorotate to orotate with fumarate as the electron acceptor. This is Dihydroorotate dehydrogenase A (fumarate) (pyrDA) from Lactococcus lactis subsp. lactis (strain IL1403) (Streptococcus lactis).